The sequence spans 91 residues: Transcriptional repressor FrmR (91 aa).

It belongs to the FrmR/RcnR family. As to quaternary structure, homotetramer.

The protein localises to the cytoplasm. Formaldehyde sensor. In the absence of formaldehyde, mediates repression of the frmRAB operon. Acts by binding directly to the frmRAB promoter region. In the presence of formaldehyde, it dissociates from the frmRAB promoter region and allows expression of the formaldehyde detoxification system encoded by frmA and frmB. The chain is Transcriptional repressor FrmR from Escherichia coli (strain UTI89 / UPEC).